A 637-amino-acid polypeptide reads, in one-letter code: Biosynthetic arginine decarboxylase (637 aa).

N6-(pyridoxal phosphate)lysine is present on Lys101. 286–296 (FDVGGGLAVDY) provides a ligand contact to substrate.

Belongs to the Orn/Lys/Arg decarboxylase class-II family. SpeA subfamily. Mg(2+) serves as cofactor. Pyridoxal 5'-phosphate is required as a cofactor.

It catalyses the reaction L-arginine + H(+) = agmatine + CO2. Its pathway is amine and polyamine biosynthesis; agmatine biosynthesis; agmatine from L-arginine: step 1/1. In terms of biological role, catalyzes the biosynthesis of agmatine from arginine. The sequence is that of Biosynthetic arginine decarboxylase from Shewanella loihica (strain ATCC BAA-1088 / PV-4).